A 179-amino-acid polypeptide reads, in one-letter code: MEIRDNNKVNLCFAFDNLRKELSRPYGILFTNNKVFLDFVSKSIQQGFKVITVGDYVSRVLEENGIIPFLEVIDGKTKRSIPQHRAIVKNKEYRVTNEAGKIRFEIFEIIENILKDRDGGVVFVNGEEDLLVIPVILSANNGDIVIYGQPNAGAVVIIVNEMIKWRVRDILEKAVVEEC.

GTP-binding residues include aspartate 55, valine 57, aspartate 74, lysine 76, and glutamate 128.

It belongs to the GTP-dependent DPCK family.

The enzyme catalyses 3'-dephospho-CoA + GTP = GDP + CoA + H(+). The protein operates within cofactor biosynthesis; coenzyme A biosynthesis. In terms of biological role, catalyzes the GTP-dependent phosphorylation of the 3'-hydroxyl group of dephosphocoenzyme A to form coenzyme A (CoA). The protein is GTP-dependent dephospho-CoA kinase of Saccharolobus islandicus (strain M.16.27) (Sulfolobus islandicus).